The sequence spans 966 residues: MPESLIAGIPVHFPFEPYPVQRAYMEKVIHCLRDGTNGVLESPTGTGKTLSLLCSSLAWIRTRQSEHQMQMVKMEKADFSGIGGGAPGGDLSELAKTMGRANNWGVPKVIYASRTHSQLTQAMRELKRTAYANMRSVVLGSRDQLCIHPEVMRELGNSNKTNMCKLRVHSKTCSFQMRVESRKDHPDLRGPTIMDIEDLVKVGQRLKICPYFASRELARANKIELGNTIVILDEAHNIEKICEEYASVQIKSSDVAMTIEDITHIRQVFASGESQDMAGDEPKDFTLDDLTLLKEMLLELEKAIDAVVVDNAVDGTTFPASMMYELLGKANFTYGNVASIISLLDKLVQYLLVASQQMSIRKGGTFTLLSDLLTIVFANKEDVMSKVYASFKVHVLVEESKQGHGKQQGAKQQGGWLGKGTIAAATGSSKVAKIINFWCFNPGFGMEQLLNTQVRSVILTSGTLAPLKPLIAELAIPVAQHLENPHIVDQSQVYVKIIGTGPDRQQLISNYANRDNPKYVSSLGQTILNVARIVPDGLLVFFPSYPMLNKCVDAWQASGLWADISCKKPIFLEPRSKDQFTSTMEEFYQAIRDSKGAVFMAVCRGKVSEGLDFADRNGRAVIITGLPFPPLKDPKVILKRRYLEANRTRENQLLSGQEWYNLDATRAVNQAIGRVIRHRNDYGAILLCDSRFKDASQVQQLSKWIRGHLGDRPQCSPFGPIVRELRQFFKNAEANMKLPDERETDSPLETVCKTEVEPLAAIPKVKREPGSNATFKSANESAIKVEMANSIKTWTPADYASAAGRKLGGAAPNAMDFMSRLDSNVSSIDFNCCTDSKSGSSGLVKIHKRERSSPTAPESTSQVSKKRYKLVENIKVEPSSSQAKVAPEDRAAFLRELRSLVTQDQFRRFGKALLEYKNGTYESFQALMAILLDVLSAPKVRYMLVGMRKYLKNEHKEEFDRRVGNL.

One can recognise a Helicase ATP-binding domain in the interval 7–284 (AGIPVHFPFE…QDMAGDEPKD (278 aa)). 42–49 (SPTGTGKT) contributes to the ATP binding site. Residues Cys146, Cys164, Cys173, and Cys209 each contribute to the [4Fe-4S] cluster site. A DEAH box motif is present at residues 233–236 (DEAH). The disordered stretch occupies residues 844–864 (VKIHKRERSSPTAPESTSQVS). Polar residues predominate over residues 853–863 (SPTAPESTSQV). At Thr855 the chain carries Phosphothreonine.

This sequence belongs to the helicase family. RAD3/XPD subfamily.

It localises to the nucleus. It catalyses the reaction ATP + H2O = ADP + phosphate + H(+). Its function is as follows. A probable ATP-dependent DNA helicase implicated in DNA repair and the maintenance of genomic stability. Acts as an anti-recombinase to counteract toxic recombination and limit crossover during meiosis. Regulates meiotic recombination and crossover homeostasis by physically dissociating strand invasion events and thereby promotes noncrossover repair by meiotic synthesis dependent strand annealing (SDSA) as well as disassembly of D loop recombination intermediates. This is Regulator of telomere elongation helicase 1 homolog from Drosophila sechellia (Fruit fly).